Reading from the N-terminus, the 68-residue chain is uncharacterized protein (68 aa).

This is an uncharacterized protein from Feline immunodeficiency virus (strain San Diego) (FIV).